Here is a 68-residue protein sequence, read N- to C-terminus: MKIIVVLAVLMLVSAQVCLVSAAEMGHSSDNELSSRDLVKRFFLPPCAHKGTCGKRSIESSEGANGGE.

The N-terminal stretch at 1 to 15 (MKIIVVLAVLMLVSA) is a signal peptide. Positions 16 to 41 (QVCLVSAAEMGHSSDNELSSRDLVKR) are excised as a propeptide. Cys47 and Cys53 form a disulfide bridge. Cys53 bears the Cysteine amide mark. Residues 57 to 68 (SIESSEGANGGE) constitute a propeptide that is removed on maturation.

As to expression, expressed by the skin glands.

It is found in the secreted. In Crinia riparia (Streambank froglet), this protein is Riparin-1.5 amide.